We begin with the raw amino-acid sequence, 555 residues long: GPI-anchor transamidase component PIGS (555 aa).

At 2–18 (AAAGAAATHLEVARGKR) the chain is on the cytoplasmic side. Positions 15 and 18 each coordinate a cardiolipin. A helical membrane pass occupies residues 19 to 39 (AALFFAAVAIVLGLPLWWKTT). At 40-517 (ETYRASLPYS…LHLLYFPDDQ (478 aa)) the chain is on the lumenal side. N-linked (GlcNAc...) asparagine glycosylation is found at Asn-267 and Asn-370. A helical transmembrane segment spans residues 518–532 (KFAIYIPLFLPMAVP). Residues 533–555 (ILLSLVKIFLETRKSWRKPEKTD) are Cytoplasmic-facing.

The protein belongs to the PIGS family. Heteropentamer. Part of the GPI-anchor transamidase complex, consisting of PIGK, PIGT, PIGS, PIGU and GAA1.

The protein resides in the endoplasmic reticulum membrane. It participates in glycolipid biosynthesis; glycosylphosphatidylinositol-anchor biosynthesis. In terms of biological role, component of the glycosylphosphatidylinositol-anchor (GPI-anchor) transamidase (GPI-T) complex that catalyzes the formation of the linkage between a proprotein and a GPI-anchor and participates in GPI anchored protein biosynthesis. This Homo sapiens (Human) protein is GPI-anchor transamidase component PIGS.